Here is a 291-residue protein sequence, read N- to C-terminus: uncharacterized protein (291 aa).

It belongs to the pseudouridine synthase RluA family.

It catalyses the reaction a uridine in RNA = a pseudouridine in RNA. This is an uncharacterized protein from Synechocystis sp. (strain ATCC 27184 / PCC 6803 / Kazusa).